The following is a 176-amino-acid chain: MDQQQQGDKNLTVFVGPWGGNGGTTWDDGIYDGVREIRLVYDHCIDSISVIYDKNGKPAKSEKHGGVGGNKTSEIKLQYPEEYLTGVSGYYCPMVNSGTPVIRSMTFKSNKQVYGPYGVEQGTPFTFSVNGGRIVGMNGRSGWYLDSIGFHLSRPKSTKMINKLRKKIHWLTRIVA.

Residues 12–154 form the Jacalin-type lectin domain; it reads TVFVGPWGGN…LDSIGFHLSR (143 aa).

The protein belongs to the jacalin lectin family.

This Arabidopsis thaliana (Mouse-ear cress) protein is Jacalin-related lectin 19 (JAL19).